The sequence spans 400 residues: Melanization protease 1 (400 aa).

Positions 1-22 (MEPHFFFTVLWMLLMGTSSTYA) are cleaved as a signal peptide. Positions 23–137 (QEIFGYCRTP…PNCGENFGDR (115 aa)) are cleaved as a propeptide — activation peptide. The region spanning 28–91 (YCRTPDENSG…FCFTNVQICC (64 aa)) is the Clip domain. Cystine bridges form between Cys29-Cys90, Cys39-Cys70, and Cys45-Cys91. The interval 98–120 (NQQPQWGNHPQPTQTTKPTKRSG) is disordered. 3 disulfides stabilise this stretch: Cys130-Cys268, Cys168-Cys184, and Cys210-Cys220. The Peptidase S1 domain maps to 138–399 (VVGGNETTKR…YLNWIENNVR (262 aa)). Asn142 is a glycosylation site (N-linked (GlcNAc...) asparagine). His183 (charge relay system) is an active-site residue. Glu201, Asp203, Thr206, and Asp209 together coordinate Ca(2+). Residue Asp248 is the Charge relay system of the active site. Residue Asn296 is glycosylated (N-linked (GlcNAc...) asparagine). 2 disulfides stabilise this stretch: Cys315–Cys332 and Cys342–Cys375. Ser346 serves as the catalytic Charge relay system.

The protein belongs to the peptidase S1 family. CLIP subfamily.

Its function is as follows. Serine protease which plays an essential role in the melanization immune response by acting downstream of sp7 to activate prophenoloxidase (PPO1). May function in diverse Hayan-dependent PPO1-activating cascades that are negatively controlled by different serpin proteins; Spn27A in the hemolymph and Spn77BA in the trachea. Regulation of melanization and PPO1 activation appears to be largely independent of the Toll signaling pathway. The polypeptide is Melanization protease 1 (Drosophila melanogaster (Fruit fly)).